Consider the following 418-residue polypeptide: MERLLIRGGNPLRGDIRISGAKNAALPVMAATLLADGPTTVGNIPHLHDVTTTMELLGRMGVELTVHEGMEVEVNTATIHSFRAPYELVKTMRASILVLGPLLARFGQAEVSLPGGCAIGSRPVNIHVDGLRAMGAEIEVRDGYIKGRADRLQGAHIRMDVSTVTGTENLMMAAALARGTTVLENAAREPEVINLADCINAMGGHVQGAGTSTITIEGVDTLRGVHHRVLPDRIETGTYLVAAAMTGGEVRLKDTAPELVESVLGKLRESGAEVSAGRDWVTLRMEGRPRAVDLETAPYPGFPTDMQAQFCALNAISTGEGTVTETVFENRFMHCLEMQRMGADIQIEGARARIRGVEKLTAAPVIATDLRASASLVLAGLVAEGETRVDRIYHIDRGYECIEEKLAQLGADIQRVPD.

22–23 (KN) provides a ligand contact to phosphoenolpyruvate. Arg93 is a binding site for UDP-N-acetyl-alpha-D-glucosamine. Residue Cys117 is the Proton donor of the active site. 2-(S-cysteinyl)pyruvic acid O-phosphothioketal is present on Cys117. Positions 305 and 327 each coordinate UDP-N-acetyl-alpha-D-glucosamine.

It belongs to the EPSP synthase family. MurA subfamily.

The protein localises to the cytoplasm. It catalyses the reaction phosphoenolpyruvate + UDP-N-acetyl-alpha-D-glucosamine = UDP-N-acetyl-3-O-(1-carboxyvinyl)-alpha-D-glucosamine + phosphate. It functions in the pathway cell wall biogenesis; peptidoglycan biosynthesis. Functionally, cell wall formation. Adds enolpyruvyl to UDP-N-acetylglucosamine. This is UDP-N-acetylglucosamine 1-carboxyvinyltransferase from Halorhodospira halophila (strain DSM 244 / SL1) (Ectothiorhodospira halophila (strain DSM 244 / SL1)).